A 428-amino-acid chain; its full sequence is RF4 protein (428 aa).

N-linked (GlcNAc...) asparagine glycans are attached at residues asparagine 8, asparagine 205, and asparagine 344.

Not known. The sequence is that of RF4 protein (RF4) from Kluyveromyces lactis (strain ATCC 8585 / CBS 2359 / DSM 70799 / NBRC 1267 / NRRL Y-1140 / WM37) (Yeast).